Reading from the N-terminus, the 129-residue chain is Small ribosomal subunit protein uS11 (129 aa).

It belongs to the universal ribosomal protein uS11 family. In terms of assembly, part of the 30S ribosomal subunit. Interacts with proteins S7 and S18. Binds to IF-3.

Functionally, located on the platform of the 30S subunit, it bridges several disparate RNA helices of the 16S rRNA. Forms part of the Shine-Dalgarno cleft in the 70S ribosome. In Oleidesulfovibrio alaskensis (strain ATCC BAA-1058 / DSM 17464 / G20) (Desulfovibrio alaskensis), this protein is Small ribosomal subunit protein uS11.